A 217-amino-acid chain; its full sequence is Probable transaldolase (217 aa).

K83 serves as the catalytic Schiff-base intermediate with substrate.

It belongs to the transaldolase family. Type 3B subfamily.

The protein localises to the cytoplasm. The enzyme catalyses D-sedoheptulose 7-phosphate + D-glyceraldehyde 3-phosphate = D-erythrose 4-phosphate + beta-D-fructose 6-phosphate. It functions in the pathway carbohydrate degradation; pentose phosphate pathway; D-glyceraldehyde 3-phosphate and beta-D-fructose 6-phosphate from D-ribose 5-phosphate and D-xylulose 5-phosphate (non-oxidative stage): step 2/3. Transaldolase is important for the balance of metabolites in the pentose-phosphate pathway. This Bartonella tribocorum (strain CIP 105476 / IBS 506) protein is Probable transaldolase.